Reading from the N-terminus, the 195-residue chain is Exosome complex component CSL4 (195 aa).

A phosphoserine mark is found at Ser21 and Ser98. The S1 motif domain maps to 66–147 (DVGAIVTCKV…AQSNYLLTTA (82 aa)).

This sequence belongs to the CSL4 family. In terms of assembly, component of the RNA exosome core complex (Exo-9), composed of EXOSC1, EXOSC2, EXOSC3, EXOSC4, EXOSC5, EXOSC6, EXOSC7, EXOSC8 and EXOSC9; within the complex interacts with EXOSC6. The catalytically inactive RNA exosome core complex (Exo-9) associates with the catalytic subunit EXOSC10/RRP6. Exo-9 may associate with DIS3 to form the nucleolar exosome complex, or DIS3L to form the cytoplasmic exosome complex. Exo-9 is formed by a hexameric base ring consisting of the heterodimers EXOSC4-EXOSC9, EXOSC5-EXOSC8 and EXOSC6-EXOSC7, and a cap ring consisting of EXOSC1, EXOSC2 and EXOSC3. The RNA exosome complex associates with cofactors C1D/RRP47, MPHOSPH6/MPP6 and MTREX/MTR4. Interacts with DDX60.

It localises to the nucleus. The protein localises to the nucleolus. Its subcellular location is the cytoplasm. Functionally, non-catalytic component of the RNA exosome complex which has 3'-&gt;5' exoribonuclease activity and participates in a multitude of cellular RNA processing and degradation events. In the nucleus, the RNA exosome complex is involved in proper maturation of stable RNA species such as rRNA, snRNA and snoRNA, in the elimination of RNA processing by-products and non-coding 'pervasive' transcripts, such as antisense RNA species and promoter-upstream transcripts (PROMPTs), and of mRNAs with processing defects, thereby limiting or excluding their export to the cytoplasm. The RNA exosome may be involved in Ig class switch recombination (CSR) and/or Ig variable region somatic hypermutation (SHM) by targeting AICDA deamination activity to transcribed dsDNA substrates. In the cytoplasm, the RNA exosome complex is involved in general mRNA turnover and specifically degrades inherently unstable mRNAs containing AU-rich elements (AREs) within their 3' untranslated regions, and in RNA surveillance pathways, preventing translation of aberrant mRNAs. It seems to be involved in degradation of histone mRNA. The catalytic inactive RNA exosome core complex of 9 subunits (Exo-9) is proposed to play a pivotal role in the binding and presentation of RNA for ribonucleolysis, and to serve as a scaffold for the association with catalytic subunits and accessory proteins or complexes. EXOSC1 as peripheral part of the Exo-9 complex stabilizes the hexameric ring of RNase PH-domain subunits through contacts with EXOSC6 and EXOSC8. This is Exosome complex component CSL4 (EXOSC1) from Homo sapiens (Human).